We begin with the raw amino-acid sequence, 181 residues long: Large ribosomal subunit protein uL6 (181 aa).

Belongs to the universal ribosomal protein uL6 family. In terms of assembly, part of the 50S ribosomal subunit.

Functionally, this protein binds to the 23S rRNA, and is important in its secondary structure. It is located near the subunit interface in the base of the L7/L12 stalk, and near the tRNA binding site of the peptidyltransferase center. This chain is Large ribosomal subunit protein uL6, found in Synechococcus sp. (strain JA-3-3Ab) (Cyanobacteria bacterium Yellowstone A-Prime).